A 395-amino-acid chain; its full sequence is Pyruvate synthase subunit PorA (395 aa).

As to quaternary structure, heterotetramer of one alpha, one beta, one delta and one gamma chain.

The catalysed reaction is 2 oxidized [2Fe-2S]-[ferredoxin] + pyruvate + CoA = 2 reduced [2Fe-2S]-[ferredoxin] + acetyl-CoA + CO2 + H(+). This chain is Pyruvate synthase subunit PorA (porA), found in Pyrococcus abyssi (strain GE5 / Orsay).